The chain runs to 93 residues: Acylphosphatase (93 aa).

C5 and C49 form a disulfide bridge. The Acylphosphatase-like domain occupies 5–93 (CIIAWVYGRV…ETLTGFSIRY (89 aa)). Catalysis depends on residues R20 and N38.

This sequence belongs to the acylphosphatase family.

It catalyses the reaction an acyl phosphate + H2O = a carboxylate + phosphate + H(+). The chain is Acylphosphatase from Salmonella typhi.